The sequence spans 113 residues: Large ribosomal subunit protein uL22 (113 aa).

This sequence belongs to the universal ribosomal protein uL22 family. As to quaternary structure, part of the 50S ribosomal subunit.

Its function is as follows. This protein binds specifically to 23S rRNA; its binding is stimulated by other ribosomal proteins, e.g. L4, L17, and L20. It is important during the early stages of 50S assembly. It makes multiple contacts with different domains of the 23S rRNA in the assembled 50S subunit and ribosome. Functionally, the globular domain of the protein is located near the polypeptide exit tunnel on the outside of the subunit, while an extended beta-hairpin is found that lines the wall of the exit tunnel in the center of the 70S ribosome. The chain is Large ribosomal subunit protein uL22 from Xanthomonas axonopodis pv. citri (strain 306).